Reading from the N-terminus, the 969-residue chain is Chromosome transmission fidelity protein 18 homolog (969 aa).

The segment at 30 to 97 (EGTRDQAPPG…APSSPMVKRP (68 aa)) is disordered. Thr51 is modified (phosphothreonine). Ser221 is modified (phosphoserine). Disordered stretches follow at residues 250–269 (SEGEEAVLEGPPAEEPAPGQ) and 318–340 (RKPRPGVETTRVGKEATAPGKWK). The span at 257-268 (LEGPPAEEPAPG) shows a compositional bias: low complexity. 369 to 376 (GPPGLGKT) is a binding site for ATP. A disordered region spans residues 856 to 889 (ARSGPQVDQGSSGPASLWTDSGEKGTRQPAPRNH). The segment covering 876 to 889 (SGEKGTRQPAPRNH) has biased composition (basic and acidic residues).

The protein belongs to the activator 1 small subunits family. CTF18 subfamily. Component of the CTF18-RFC complex, which consists of CTF18, CTF8, DCC1, RFC2, RFC3, RFC4 and RFC5. During assembly of the CTF18-RFC complex, CTF18 may first assemble into a subcomplex with RFC2, RFC3, RFC4 and RFC5. CTF18 then interacts directly with CTF8, which in turn interacts with DCC1. The CTF18-RFC complex associates with PCNA and with DNA polymerase POLH. The CTF18-RFC complex does not interact with the Rad9/Rad1/Hus1 complex. CTF18 interacts with SMC1A and RAD21. Interacts with DDX11.

The protein resides in the nucleus. Chromosome cohesion factor involved in sister chromatid cohesion and fidelity of chromosome transmission. Component of one of the cell nuclear antigen loader complexes, CTF18-replication factor C (CTF18-RFC), which consists of CTF18, CTF8, DCC1, RFC2, RFC3, RFC4 and RFC5. The CTF18-RFC complex binds to single-stranded and primed DNAs and has weak ATPase activity that is stimulated by the presence of primed DNA, replication protein A (RPA) and by proliferating cell nuclear antigen (PCNA). The CTF18-RFC complex catalyzes the ATP-dependent loading of PCNA onto primed and gapped DNA. Interacts with and stimulates DNA polymerase POLH. During DNA repair synthesis, involved in loading DNA polymerase POLE at the sites of local damage. This Mus musculus (Mouse) protein is Chromosome transmission fidelity protein 18 homolog (Chtf18).